A 49-amino-acid chain; its full sequence is Large ribosomal subunit protein bL32 (49 aa).

It belongs to the bacterial ribosomal protein bL32 family.

The chain is Large ribosomal subunit protein bL32 from Nitratiruptor sp. (strain SB155-2).